The primary structure comprises 220 residues: MKKEKAVVVFSGGQDSTTCLFWAIEQFAEVEAVTFNYNQRHKLEIDCAAKIAKELGIKHTVLDMSLLNQLAPNALTRTDMEITHEEGELPSTFVDGRNLLFLSFAAVLAKQVGARHIVTGVCETDFSGYPDCRDVFVKSLNVTLNLSMDYPFVIHTPLMWIDKAETWKLSDELGAFEFVREKTLTCYNGIIGDGCGECPACQLRKAGLDTYLQEREGANN.

Residue 10–20 participates in ATP binding; sequence FSGGQDSTTCL. Zn(2+) is bound by residues cysteine 186, cysteine 195, cysteine 198, and cysteine 201.

This sequence belongs to the QueC family. As to quaternary structure, homodimer. It depends on Zn(2+) as a cofactor.

The enzyme catalyses 7-carboxy-7-deazaguanine + NH4(+) + ATP = 7-cyano-7-deazaguanine + ADP + phosphate + H2O + H(+). It participates in purine metabolism; 7-cyano-7-deazaguanine biosynthesis. Its function is as follows. Catalyzes the ATP-dependent conversion of 7-carboxy-7-deazaguanine (CDG) to 7-cyano-7-deazaguanine (preQ(0)). The chain is 7-cyano-7-deazaguanine synthase from Bacillus cereus (strain G9842).